The primary structure comprises 28 residues: Ranatuerin-2SEc (28 aa).

An intrachain disulfide couples Cys23 to Cys28.

In terms of tissue distribution, expressed by the skin glands.

It is found in the secreted. Its function is as follows. Mast cell degranulating peptide. Causes histamine release from rat peritoneal mast cells in vitro. Has antibacterial activity against the Gram-negative bacterium E.coli K12 and Gram-positive bacterium M.luteus NCT C2665. The protein is Ranatuerin-2SEc of Lithobates sevosus (Dusky gopher frog).